We begin with the raw amino-acid sequence, 432 residues long: Methylenetetrahydrofolate--tRNA-(uracil-5-)-methyltransferase TrmFO (432 aa).

7 to 12 (GAGLAG) lines the FAD pocket.

The protein belongs to the MnmG family. TrmFO subfamily. It depends on FAD as a cofactor.

Its subcellular location is the cytoplasm. The catalysed reaction is uridine(54) in tRNA + (6R)-5,10-methylene-5,6,7,8-tetrahydrofolate + NADH + H(+) = 5-methyluridine(54) in tRNA + (6S)-5,6,7,8-tetrahydrofolate + NAD(+). The enzyme catalyses uridine(54) in tRNA + (6R)-5,10-methylene-5,6,7,8-tetrahydrofolate + NADPH + H(+) = 5-methyluridine(54) in tRNA + (6S)-5,6,7,8-tetrahydrofolate + NADP(+). Catalyzes the folate-dependent formation of 5-methyl-uridine at position 54 (M-5-U54) in all tRNAs. The sequence is that of Methylenetetrahydrofolate--tRNA-(uracil-5-)-methyltransferase TrmFO from Anoxybacillus flavithermus (strain DSM 21510 / WK1).